Here is a 370-residue protein sequence, read N- to C-terminus: Cyanuric acid amidohydrolase (370 aa).

Positions Met1 to Arg106 are RU A. Substrate contacts are provided by residues Arg54 and Ser85–Gly86. Positions Arg115–Ala251 are RU B. Lys165 is a catalytic residue. Substrate contacts are provided by residues Arg197 and Ser234 to Ala235. Ser234 serves as the catalytic Nucleophile. The interval Phe257–Asp370 is RU C. Position 302 (Glu302) interacts with Mg(2+). Substrate contacts are provided by residues Arg329 and Ser348–Gly349. Residues Ala351, Gln354, Gly355, Pro356, and Gly359 each coordinate Mg(2+).

The protein belongs to the cyclic amide hydrolase (CyAH) family. In terms of assembly, homotetramer.

It catalyses the reaction cyanurate + H2O = 1-carboxybiuret + H(+). The protein operates within xenobiotic degradation; atrazine degradation; biuret from cyanurate: step 1/1. With respect to regulation, inhibited by barbituric acid. Its function is as follows. Responsible for the hydrolysis of cyanuric acid, an intermediate formed during catabolism of s-triazine based compounds in herbicides such as atrazine and polymers such as melamine. Catalyzes the hydrolytic opening of the s-triazine ring of cyanuric acid (2,4,6-trihydroxy-s-triazine) to yield carbon dioxide and carboxybiuret, which spontaneously decarboxylates to biuret. The polypeptide is Cyanuric acid amidohydrolase (Bradyrhizobium diazoefficiens (strain JCM 10833 / BCRC 13528 / IAM 13628 / NBRC 14792 / USDA 110)).